A 398-amino-acid chain; its full sequence is 1-deoxy-D-xylulose 5-phosphate reductoisomerase (398 aa).

NADPH is bound by residues T10, G11, S12, I13, N38, and N124. K125 contacts 1-deoxy-D-xylulose 5-phosphate. E126 provides a ligand contact to NADPH. Position 150 (D150) interacts with Mn(2+). The 1-deoxy-D-xylulose 5-phosphate site is built by S151, E152, S176, and H199. Position 152 (E152) interacts with Mn(2+). An NADPH-binding site is contributed by G205. 1-deoxy-D-xylulose 5-phosphate contacts are provided by S212, N217, K218, and E221. E221 is a binding site for Mn(2+).

This sequence belongs to the DXR family. Mg(2+) is required as a cofactor. The cofactor is Mn(2+).

It carries out the reaction 2-C-methyl-D-erythritol 4-phosphate + NADP(+) = 1-deoxy-D-xylulose 5-phosphate + NADPH + H(+). It functions in the pathway isoprenoid biosynthesis; isopentenyl diphosphate biosynthesis via DXP pathway; isopentenyl diphosphate from 1-deoxy-D-xylulose 5-phosphate: step 1/6. Catalyzes the NADPH-dependent rearrangement and reduction of 1-deoxy-D-xylulose-5-phosphate (DXP) to 2-C-methyl-D-erythritol 4-phosphate (MEP). This chain is 1-deoxy-D-xylulose 5-phosphate reductoisomerase, found in Rippkaea orientalis (strain PCC 8801 / RF-1) (Cyanothece sp. (strain PCC 8801)).